The sequence spans 340 residues: Phosphoribosylformylglycinamidine cyclo-ligase (340 aa).

It belongs to the AIR synthase family.

The protein localises to the cytoplasm. The catalysed reaction is 2-formamido-N(1)-(5-O-phospho-beta-D-ribosyl)acetamidine + ATP = 5-amino-1-(5-phospho-beta-D-ribosyl)imidazole + ADP + phosphate + H(+). It participates in purine metabolism; IMP biosynthesis via de novo pathway; 5-amino-1-(5-phospho-D-ribosyl)imidazole from N(2)-formyl-N(1)-(5-phospho-D-ribosyl)glycinamide: step 2/2. The sequence is that of Phosphoribosylformylglycinamidine cyclo-ligase from Streptococcus pyogenes serotype M18 (strain MGAS8232).